The following is a 198-amino-acid chain: Transcription factor elt-7 (198 aa).

The span at 1–18 (MLPETTTLQPLPSVTTIM) shows a compositional bias: polar residues. Residues 1–20 (MLPETTTLQPLPSVTTIMNE) are disordered. The GATA-type zinc-finger motif lies at 143–167 (CSHCSTTTTTLWRKNDEGNLECNAC).

The protein resides in the nucleus. In terms of biological role, transcriptional activator that binds to the consensus sequence 5'-[AT]GATA[AG]-3'. Required for gut-specific differentiation, specifically acting with the GATA region-binding transcription factor elt-2 to control normal gene expression and promote normal formation of the intestine. May have a protective role in response to infection by Gram-negative bacteria such as P.aeruginosa. The polypeptide is Transcription factor elt-7 (Caenorhabditis elegans).